The primary structure comprises 145 residues: Peptide methionine sulfoxide reductase MsrB (145 aa).

The MsrB domain occupies Lys-6 to Val-129. The Nucleophile role is filled by Cys-118.

Belongs to the MsrB Met sulfoxide reductase family.

It carries out the reaction L-methionyl-[protein] + [thioredoxin]-disulfide + H2O = L-methionyl-(R)-S-oxide-[protein] + [thioredoxin]-dithiol. The polypeptide is Peptide methionine sulfoxide reductase MsrB (Listeria monocytogenes serovar 1/2a (strain ATCC BAA-679 / EGD-e)).